The sequence spans 349 residues: Histone-lysine N-methyltransferase ATXR6 (349 aa).

The disordered stretch occupies residues 1–28 (MVAVRRRRTQASNPRSEPPQHMSDHDSD). A PHD-type zinc finger spans residues 32–82 (DTVCEECSSGKQPAKLLLCDKCDKGFHLFCLRPILVSVPKGSWFCPSCSKH). The PIP motif motif lies at 92 to 99 (QTKIIDFF). A disordered region spans residues 105–126 (PDSSQISSSSDSIGKKRKKTSL). Positions 106–116 (DSSQISSSSDS) are enriched in low complexity. Methionine 190 lines the substrate pocket. In terms of domain architecture, SET spans 214 to 337 (PPLMVVFDPY…KGERLYYDYN (124 aa)). S-adenosyl-L-methionine is bound by residues 224 to 226 (EGF) and 287 to 291 (RFISG). Residues arginine 309 and 339–340 (YE) contribute to the substrate site. Residues tyrosine 343 and valine 349 each contribute to the S-adenosyl-L-methionine site.

The protein belongs to the class V-like SAM-binding methyltransferase superfamily. Histone-lysine methyltransferase family. TRX/MLL subfamily. Interacts with PCNA1 and PCNA2. Interacts (via PHD domain) with HTR1 (via N-terminus). Interacts with IPS1. As to expression, expressed in leaves, roots, stems, flowers and siliques. Up-regulated in tissues where cell division is active.

It localises to the nucleus. It carries out the reaction L-lysyl(27)-[histone H3] + S-adenosyl-L-methionine = N(6)-methyl-L-lysyl(27)-[histone H3] + S-adenosyl-L-homocysteine + H(+). Functionally, histone methyltransferase that specifically monomethylates 'Lys-27' of histone H3 (H3K27me1). Has higher activity on nucleosomes containing H3.1 than H3.3. Involved in the formation of constitutive heterochromatin and the silencing of heterochromatic elements. May act as a positive regulator of the G1-S transition. Influences which sets of rRNA gene variants are expressed or silenced. Up-regulated by E2FB. This chain is Histone-lysine N-methyltransferase ATXR6 (ATXR6), found in Arabidopsis thaliana (Mouse-ear cress).